A 423-amino-acid polypeptide reads, in one-letter code: MERYTDLVISKIPELGFTNLLCHIYSLAGLCSNIDVSKFLTNCNGYVVEKYDKSTTAGKVSCIPIGMMLELVESRHLSRPNSSDELDQKKELTDELKTRYHSIYDVFELPTSIPLAYFFKPRLREKVSKAIDFSQMDLKIDDLSRKGIHTGENPKVVKMKIEPERGAWMSNRSIKNLVSQFAYGSEVDYIGQFDMRFLNSLAIHEKFDAFMNKHILSYILKDKIKSSTSRFVMFGFCYLSHWKCVIYDKKQCLVSFYDSGGNIPTEFHHYNNFYFYSFSDGFNTNHRHSVLDNTNCDIDVLFRFFECIFGAKIGCINVEVNQLLESECGMFISLFMILCTRTPPKSFKSLKKVYTFFKFLADKKMTLFKSILFNLQDLSLDITETDNAGLKEYKRMEKWTKKSINVICDKLTTKLNRIVDDDE.

Residues His241, Asp248, and Cys328 contribute to the active site.

Belongs to the peptidase C57 family.

Its subcellular location is the virion. In terms of biological role, late protein responsible for processing most or all of the viral core and membrane proteins known to undergo morphogenesis-associated proteolysis. These proteolytic events are involved in the transformation of immature virions (IV) into mature virions (MV). Probably cleaves at least the OPG129, OPG136, OPG098, and OPG144 precursors preferentially at Ala-Gly-|-Ala motifs. Also seems to process Ala-Gly-|-Ser and Ala-Gly-|-Thr motifs. The protein is Core protease OPG082 (OPG083) of Homo sapiens (Human).